The following is an 81-amino-acid chain: Sulfur carrier protein TusA (81 aa).

Residue C19 is the Cysteine persulfide intermediate of the active site.

This sequence belongs to the sulfur carrier protein TusA family. As to quaternary structure, interacts with IscS.

It is found in the cytoplasm. The protein operates within tRNA modification. Sulfur carrier protein involved in sulfur trafficking in the cell. Part of a sulfur-relay system required for 2-thiolation during synthesis of 2-thiouridine of the modified wobble base 5-methylaminomethyl-2-thiouridine (mnm(5)s(2)U) in tRNA. Interacts with IscS and stimulates its cysteine desulfurase activity. Accepts an activated sulfur from IscS, which is then transferred to TusD, and thus determines the direction of sulfur flow from IscS to 2-thiouridine formation. Also appears to be involved in sulfur transfer for the biosynthesis of molybdopterin. This Escherichia fergusonii (strain ATCC 35469 / DSM 13698 / CCUG 18766 / IAM 14443 / JCM 21226 / LMG 7866 / NBRC 102419 / NCTC 12128 / CDC 0568-73) protein is Sulfur carrier protein TusA.